Reading from the N-terminus, the 297-residue chain is HTH-type transcriptional regulator PerR (297 aa).

Residues 7–64 (APLNLLRAFEAAGRTGAFALAASELELSPSAISHAIRKLENLLDVRLFQRSTREITLT) form the HTH lysR-type domain. Positions 24-44 (FALAASELELSPSAISHAIRK) form a DNA-binding region, H-T-H motif.

The protein belongs to the LysR transcriptional regulatory family.

Its function is as follows. Apparent regulatory gene involved in peroxide resistance in stationary phase. The chain is HTH-type transcriptional regulator PerR (perR) from Escherichia coli (strain K12).